A 726-amino-acid polypeptide reads, in one-letter code: PTS system glucose-specific EIICBA component (726 aa).

The region spanning M1–G453 is the PTS EIIC type-1 domain. 9 consecutive transmembrane segments (helical) span residues F18 to I38, I62 to W82, A90 to V110, V139 to G159, F184 to W204, F311 to Y331, G344 to Y364, M365 to F385, and I419 to F439. In terms of domain architecture, PTS EIIB type-1 spans G473–I555. C495 (phosphocysteine intermediate; for EIIB activity) is an active-site residue. The region spanning D596–N700 is the PTS EIIA type-1 domain. The active-site Tele-phosphohistidine intermediate; for EIIA activity is H648.

Its subcellular location is the cell membrane. It catalyses the reaction N(pros)-phospho-L-histidyl-[protein] + D-glucose(out) = D-glucose 6-phosphate(in) + L-histidyl-[protein]. Functionally, the phosphoenolpyruvate-dependent sugar phosphotransferase system (sugar PTS), a major carbohydrate active transport system, catalyzes the phosphorylation of incoming sugar substrates concomitantly with their translocation across the cell membrane. This system is involved in glucose transport. This chain is PTS system glucose-specific EIICBA component (exp5), found in Streptococcus pneumoniae serotype 4 (strain ATCC BAA-334 / TIGR4).